Reading from the N-terminus, the 257-residue chain is Phosphatidylglycerol--prolipoprotein diacylglyceryl transferase (257 aa).

The next 4 helical transmembrane spans lie at 8–28 (IFGL…ILAY), 48–68 (VFIV…VIFN), 84–104 (EGGL…YLMS), and 109–129 (LNFL…QAIG). Arg130 contacts a 1,2-diacyl-sn-glycero-3-phospho-(1'-sn-glycerol). The next 3 helical transmembrane spans lie at 169–189 (PTFL…LLIT), 196–216 (GSIF…IEGL), and 225–245 (SLRM…ILII).

It belongs to the Lgt family.

The protein localises to the cell membrane. The catalysed reaction is L-cysteinyl-[prolipoprotein] + a 1,2-diacyl-sn-glycero-3-phospho-(1'-sn-glycerol) = an S-1,2-diacyl-sn-glyceryl-L-cysteinyl-[prolipoprotein] + sn-glycerol 1-phosphate + H(+). The protein operates within protein modification; lipoprotein biosynthesis (diacylglyceryl transfer). Its function is as follows. Catalyzes the transfer of the diacylglyceryl group from phosphatidylglycerol to the sulfhydryl group of the N-terminal cysteine of a prolipoprotein, the first step in the formation of mature lipoproteins. This Clostridium novyi (strain NT) protein is Phosphatidylglycerol--prolipoprotein diacylglyceryl transferase.